The following is a 293-amino-acid chain: Bifunctional protein FolD (293 aa).

Residues 162–164 (GQS) and Ile-227 contribute to the NADP(+) site.

The protein belongs to the tetrahydrofolate dehydrogenase/cyclohydrolase family. In terms of assembly, homodimer.

The enzyme catalyses (6R)-5,10-methylene-5,6,7,8-tetrahydrofolate + NADP(+) = (6R)-5,10-methenyltetrahydrofolate + NADPH. It carries out the reaction (6R)-5,10-methenyltetrahydrofolate + H2O = (6R)-10-formyltetrahydrofolate + H(+). It participates in one-carbon metabolism; tetrahydrofolate interconversion. Its function is as follows. Catalyzes the oxidation of 5,10-methylenetetrahydrofolate to 5,10-methenyltetrahydrofolate and then the hydrolysis of 5,10-methenyltetrahydrofolate to 10-formyltetrahydrofolate. The sequence is that of Bifunctional protein FolD from Metamycoplasma arthritidis (strain 158L3-1) (Mycoplasma arthritidis).